A 360-amino-acid polypeptide reads, in one-letter code: Peptide chain release factor 1 (360 aa).

Gln237 carries the post-translational modification N5-methylglutamine.

Belongs to the prokaryotic/mitochondrial release factor family. Methylated by PrmC. Methylation increases the termination efficiency of RF1.

It localises to the cytoplasm. Its function is as follows. Peptide chain release factor 1 directs the termination of translation in response to the peptide chain termination codons UAG and UAA. The chain is Peptide chain release factor 1 (prfA) from Pseudomonas aeruginosa (strain ATCC 15692 / DSM 22644 / CIP 104116 / JCM 14847 / LMG 12228 / 1C / PRS 101 / PAO1).